Here is a 420-residue protein sequence, read N- to C-terminus: UDP-N-acetylglucosamine 1-carboxyvinyltransferase (420 aa).

Position 22–23 (Lys-22–Asn-23) interacts with phosphoenolpyruvate. Arg-91 lines the UDP-N-acetyl-alpha-D-glucosamine pocket. The active-site Proton donor is the Cys-115. At Cys-115 the chain carries 2-(S-cysteinyl)pyruvic acid O-phosphothioketal. UDP-N-acetyl-alpha-D-glucosamine is bound by residues Arg-120–Leu-124, Lys-160–Val-163, Asp-305, and Ile-327.

This sequence belongs to the EPSP synthase family. MurA subfamily.

The protein localises to the cytoplasm. It catalyses the reaction phosphoenolpyruvate + UDP-N-acetyl-alpha-D-glucosamine = UDP-N-acetyl-3-O-(1-carboxyvinyl)-alpha-D-glucosamine + phosphate. Its pathway is cell wall biogenesis; peptidoglycan biosynthesis. Functionally, cell wall formation. Adds enolpyruvyl to UDP-N-acetylglucosamine. This chain is UDP-N-acetylglucosamine 1-carboxyvinyltransferase, found in Pectobacterium atrosepticum (strain SCRI 1043 / ATCC BAA-672) (Erwinia carotovora subsp. atroseptica).